A 105-amino-acid chain; its full sequence is Nitrogen fixation nifHD region glnB-like protein 1 (105 aa).

This sequence belongs to the P(II) protein family.

Its function is as follows. Could be involved in the regulation of nitrogen fixation. The sequence is that of Nitrogen fixation nifHD region glnB-like protein 1 (glnBI) from Methanococcus maripaludis (strain DSM 14266 / JCM 13030 / NBRC 101832 / S2 / LL).